Reading from the N-terminus, the 397-residue chain is Major outer membrane porin, serovar C (397 aa).

Residues 1 to 22 form the signal peptide; sequence MKKLLKSVLVFAALSSASSLQA.

It belongs to the chlamydial porin (CP) (TC 1.B.2) family. In terms of assembly, part of a disulfide cross-linked outer membrane complex (COMC) composed of the major outer membrane porin (MOMP), the small cysteine-rich protein (OmcA) and the large cysteine-rich periplasmic protein (OmcB).

The protein localises to the cell outer membrane. In elementary bodies (EBs, the infectious stage, which is able to survive outside the host cell) provides the structural integrity of the outer envelope through disulfide cross-links with the small cysteine-rich protein and the large cysteine-rich periplasmic protein. It has been described in publications as the Sarkosyl-insoluble COMC (Chlamydia outer membrane complex), and serves as the functional equivalent of peptidoglycan. Its function is as follows. Permits diffusion of specific solutes through the outer membrane. The sequence is that of Major outer membrane porin, serovar C (ompA) from Chlamydia trachomatis.